The sequence spans 428 residues: MAENDVDNELLDYEEDEVENAAGGDGSEAPPKKDVKGSYVSIHSSGFRDFLLKPELLRAIVDCGFEHPSEVQHECIPQAILGMDVLCQAKSGMGKTAVFVLATLQQLEPVTGQVSVLVMCHTRELAFQISKEYERFSKYMPSVKVAVFFGGLAVKKDEEVLKKNCPHIVVGTPGRILALARNKSLNLKHIKHFILDECDKMLEQLDMRRDVQEIFRMTPHEKQVMMFSATLSKEIRPVCRKFMQDPMEIFVDDETKLTLHGLQQYYVKLKDNEKNRKLFDLLDVLEFNQVVIFVKSVQRCIALAQLLVEQNFPAIAIHRGMPQEERLSRYQQFKDFQRRILVATNLFGRGMDIERVNIAFNYDMPEDSDTYLHRVARAGRFGTKGLAITFVSDENDAKILNDVQDRFEVNISELPDEIDISSYIEQTR.

The span at 1–19 shows a compositional bias: acidic residues; it reads MAENDVDNELLDYEEDEVE. Positions 1–35 are disordered; that stretch reads MAENDVDNELLDYEEDEVENAAGGDGSEAPPKKDV. The short motif at 45 to 73 is the Q motif element; it reads SGFRDFLLKPELLRAIVDCGFEHPSEVQH. The region spanning 76 to 249 is the Helicase ATP-binding domain; it reads IPQAILGMDV…RKFMQDPMEI (174 aa). 89-96 contributes to the ATP binding site; sequence AKSGMGKT. Residues 196–199 carry the DECD box motif; that stretch reads DECD. A Helicase C-terminal domain is found at 261-422; sequence GLQQYYVKLK…ELPDEIDISS (162 aa).

It belongs to the DEAD box helicase family. DECD subfamily. In terms of assembly, component of the transcription/export (TREX) complex at least composed of ALYREF/THOC4, DDX39B, SARNP/CIP29, CHTOP and the THO subcomplex.

It localises to the nucleus. The protein resides in the nucleus speckle. The catalysed reaction is ATP + H2O = ADP + phosphate + H(+). Involved in nuclear export of spliced and unspliced mRNA. Component of the TREX complex which is thought to couple mRNA transcription, processing and nuclear export, and specifically associates with spliced mRNA and not with unspliced pre-mRNA. The TREX complex is recruited to spliced mRNAs by a transcription-independent mechanism, binds to mRNA upstream of the exon-junction complex (EJC) and is recruited in a splicing- and cap-dependent manner to a region near the 5' end of the mRNA where it functions in mRNA export to the cytoplasm via the TAP/NXF1 pathway. Involved in transcription elongation and genome stability. Functionally, splice factor that is required for the first ATP-dependent step in spliceosome assembly and for the interaction of U2 snRNP with the branchpoint. Has both RNA-stimulated ATP binding/hydrolysis activity and ATP-dependent RNA unwinding activity. Even with the stimulation of RNA, the ATPase activity is weak. Can only hydrolyze ATP but not other NTPs. The RNA stimulation of ATPase activity does not have a strong preference for the sequence and length of the RNA. However, ssRNA stimulates the ATPase activity much more strongly than dsRNA. Can unwind 5' or 3' overhangs or blunt end RNA duplexes in vitro. The ATPase and helicase activities are not influenced by U2AF2; the effect of ALYREF/THOC4 is reported conflictingly. The polypeptide is Spliceosome RNA helicase DDX39B (DDX39B) (Gallus gallus (Chicken)).